The primary structure comprises 511 residues: 2-isopropylmalate synthase (511 aa).

Residues 5 to 267 (LIVFDTTLRD…DTNVDISQIV (263 aa)) form the Pyruvate carboxyltransferase domain. Mn(2+)-binding residues include D14, H202, H204, and N238. Residues 393-511 (KLSWLKVVSE…YPVERAYPQV (119 aa)) are regulatory domain.

This sequence belongs to the alpha-IPM synthase/homocitrate synthase family. LeuA type 1 subfamily. As to quaternary structure, homodimer. Mn(2+) serves as cofactor.

It localises to the cytoplasm. It carries out the reaction 3-methyl-2-oxobutanoate + acetyl-CoA + H2O = (2S)-2-isopropylmalate + CoA + H(+). It functions in the pathway amino-acid biosynthesis; L-leucine biosynthesis; L-leucine from 3-methyl-2-oxobutanoate: step 1/4. In terms of biological role, catalyzes the condensation of the acetyl group of acetyl-CoA with 3-methyl-2-oxobutanoate (2-ketoisovalerate) to form 3-carboxy-3-hydroxy-4-methylpentanoate (2-isopropylmalate). The chain is 2-isopropylmalate synthase from Nitrosococcus oceani (strain ATCC 19707 / BCRC 17464 / JCM 30415 / NCIMB 11848 / C-107).